Here is a 326-residue protein sequence, read N- to C-terminus: Meiotically up-regulated gene 113 protein (326 aa).

The protein resides in the cytoplasm. Functionally, has a role in meiosis. This Schizosaccharomyces pombe (strain 972 / ATCC 24843) (Fission yeast) protein is Meiotically up-regulated gene 113 protein (mug113).